The chain runs to 37 residues: MIEVFLFGIVLGLIPITLAGLFVTAYLQYRRGDQLDL.

Residues 5–25 (FLFGIVLGLIPITLAGLFVTA) traverse the membrane as a helical segment.

It belongs to the PetG family. The 4 large subunits of the cytochrome b6-f complex are cytochrome b6, subunit IV (17 kDa polypeptide, PetD), cytochrome f and the Rieske protein, while the 4 small subunits are PetG, PetL, PetM and PetN. The complex functions as a dimer.

Its subcellular location is the plastid. The protein localises to the chloroplast thylakoid membrane. Functionally, component of the cytochrome b6-f complex, which mediates electron transfer between photosystem II (PSII) and photosystem I (PSI), cyclic electron flow around PSI, and state transitions. PetG is required for either the stability or assembly of the cytochrome b6-f complex. The sequence is that of Cytochrome b6-f complex subunit 5 from Solanum lycopersicum (Tomato).